The sequence spans 390 residues: Formate-dependent phosphoribosylglycinamide formyltransferase (390 aa).

Residues 18–19 and Glu-78 each bind N(1)-(5-phospho-beta-D-ribosyl)glycinamide; that span reads EL. ATP contacts are provided by residues Arg-110, Lys-151, 156–161, 191–194, and Glu-199; these read SSGKGQ and EEFL. The ATP-grasp domain occupies 115-305; the sequence is DLASKELNIK…EFELHLRAFL (191 aa). Mg(2+)-binding residues include Glu-264 and Glu-276. Residues Asp-283, Lys-353, and 360-361 each bind N(1)-(5-phospho-beta-D-ribosyl)glycinamide; that span reads RR.

Belongs to the PurK/PurT family. As to quaternary structure, homodimer.

The catalysed reaction is N(1)-(5-phospho-beta-D-ribosyl)glycinamide + formate + ATP = N(2)-formyl-N(1)-(5-phospho-beta-D-ribosyl)glycinamide + ADP + phosphate + H(+). It functions in the pathway purine metabolism; IMP biosynthesis via de novo pathway; N(2)-formyl-N(1)-(5-phospho-D-ribosyl)glycinamide from N(1)-(5-phospho-D-ribosyl)glycinamide (formate route): step 1/1. Functionally, involved in the de novo purine biosynthesis. Catalyzes the transfer of formate to 5-phospho-ribosyl-glycinamide (GAR), producing 5-phospho-ribosyl-N-formylglycinamide (FGAR). Formate is provided by PurU via hydrolysis of 10-formyl-tetrahydrofolate. This Prochlorococcus marinus subsp. pastoris (strain CCMP1986 / NIES-2087 / MED4) protein is Formate-dependent phosphoribosylglycinamide formyltransferase.